The primary structure comprises 741 residues: Methionine--tRNA ligase (741 aa).

A 'HIGH' region motif is present at residues 11–21 (PYANGPIHAGH). Positions 143, 146, 156, and 159 each coordinate Zn(2+). Residues 345–349 (KFSTS) carry the 'KMSKS' region motif. Position 348 (Thr-348) interacts with ATP. Residues 641–741 (EFAKLDLRVG…KEVKLGARIR (101 aa)) enclose the tRNA-binding domain.

Belongs to the class-I aminoacyl-tRNA synthetase family. MetG type 1 subfamily. In terms of assembly, homodimer. Zn(2+) is required as a cofactor.

It is found in the cytoplasm. It carries out the reaction tRNA(Met) + L-methionine + ATP = L-methionyl-tRNA(Met) + AMP + diphosphate. Is required not only for elongation of protein synthesis but also for the initiation of all mRNA translation through initiator tRNA(fMet) aminoacylation. In Thermococcus kodakarensis (strain ATCC BAA-918 / JCM 12380 / KOD1) (Pyrococcus kodakaraensis (strain KOD1)), this protein is Methionine--tRNA ligase.